Here is a 540-residue protein sequence, read N- to C-terminus: L-aspartate oxidase (540 aa).

Residues 16–19 (SGAA), Lys38, 45–52 (STFYAQGG), 161–162 (NA), and Asp223 each bind FAD. Residues His244 and 259-260 (TE) contribute to the succinate site. The Proton donor/acceptor role is filled by Arg290. Glu375 serves as a coordination point for FAD. Ser389 is a binding site for succinate. Residue 391 to 392 (SL) coordinates FAD.

It belongs to the FAD-dependent oxidoreductase 2 family. NadB subfamily. In terms of assembly, monomer. Homodimer. Both the monomeric and dimeric forms of the enzyme are catalytically active. Requires FAD as cofactor.

The protein resides in the cytoplasm. The enzyme catalyses L-aspartate + O2 = iminosuccinate + H2O2. It carries out the reaction fumarate + L-aspartate = iminosuccinate + succinate. It participates in cofactor biosynthesis; NAD(+) biosynthesis; iminoaspartate from L-aspartate (oxidase route): step 1/1. With respect to regulation, inhibited by the product iminoaspartate. Competitively inhibited by mesotartrate. NAD acts as a competitive inhibitor to FAD. Inhibited by iodoacetic acid, diethylpyrocarbonate and tetranitromethane. Catalyzes the oxidation of L-aspartate to iminoaspartate, the first step in the de novo biosynthesis of NAD(+). Can use either oxygen or fumarate as electron acceptors, which allows the enzyme to be functional under aerobic and anaerobic conditions. In vivo, fumarate is used under anaerobic conditions, and oxygen is the predominant electron acceptor under aerobic conditions due to the lower fumarate levels. In vitro, fumarate is a more efficient electron acceptor and is kinetically superior to oxygen. In Escherichia coli (strain K12), this protein is L-aspartate oxidase.